The sequence spans 421 residues: Histidine--tRNA ligase (421 aa).

This sequence belongs to the class-II aminoacyl-tRNA synthetase family. As to quaternary structure, homodimer.

The protein localises to the cytoplasm. The catalysed reaction is tRNA(His) + L-histidine + ATP = L-histidyl-tRNA(His) + AMP + diphosphate + H(+). The polypeptide is Histidine--tRNA ligase (Coxiella burnetii (strain Dugway 5J108-111)).